The sequence spans 520 residues: Succinyl-CoA:3-ketoacid coenzyme A transferase 2B, mitochondrial (520 aa).

Residues 1-39 (MAALRLLAWALPRGVSALRPRPALPHRLIRRYVSDRSGS) constitute a mitochondrion transit peptide. A disordered region spans residues 280-299 (ERLTTRDSKPAPGSKDNDPS). The 5-glutamyl coenzyme A thioester intermediate role is filled by Glu-342.

It belongs to the 3-oxoacid CoA-transferase family. As to quaternary structure, homodimer. In terms of tissue distribution, testis specific. Expressed in late spermatids. Accumulates during spermiogenesis. Also detected in the midpiece of spermatozoa.

The protein localises to the mitochondrion. The enzyme catalyses a 3-oxo acid + succinyl-CoA = a 3-oxoacyl-CoA + succinate. Its pathway is ketone metabolism; succinyl-CoA degradation; acetoacetyl-CoA from succinyl-CoA: step 1/1. Functionally, key enzyme for ketone body catabolism. Transfers the CoA moiety from succinate to acetoacetate. Formation of the enzyme-CoA intermediate proceeds via an unstable anhydride species formed between the carboxylate groups of the enzyme and substrate. Probably play and important roles in the energy metabolism of spermatozoa. This Mus musculus (Mouse) protein is Succinyl-CoA:3-ketoacid coenzyme A transferase 2B, mitochondrial (Oxct2b).